The following is a 344-amino-acid chain: MNTLLQTIADGDPLSRPEAEEAMATMMSGSARDEHIAALLMGLRTRGETLDELVGFTKTMREFAVSVETDDPQTIDLCGTGGDGASTFNISTTASFIAAGAGATVAKHGNRSVSSQSGSADVLEALGVQIDLEKEGVEHCLHEAGIAFLFAPFFHPAMRHVMPVRKALGVRTFFNILGPLCNPAGVTRQIVGAFDTSTAQTMVRILAELDADHVITLHADDGLDEVSISASTTLFEYDASDQNPVPRSHEVGPERHDLDRASISTLEGGTAQQNASILRNILSGEDQGPRRDVALLNAAYALHVSDQYADLDACLEAAAESIDSGAALDALNTLASVSKEAKSE.

Residues glycine 79, 82 to 83 (GD), threonine 87, 89 to 92 (NIST), 107 to 115 (KHGNRSVSS), and serine 119 each bind 5-phospho-alpha-D-ribose 1-diphosphate. Residue glycine 79 participates in anthranilate binding. Position 91 (serine 91) interacts with Mg(2+). Asparagine 110 contacts anthranilate. Position 165 (arginine 165) interacts with anthranilate. Mg(2+)-binding residues include aspartate 224 and glutamate 225.

It belongs to the anthranilate phosphoribosyltransferase family. Homodimer. Mg(2+) is required as a cofactor.

The enzyme catalyses N-(5-phospho-beta-D-ribosyl)anthranilate + diphosphate = 5-phospho-alpha-D-ribose 1-diphosphate + anthranilate. The protein operates within amino-acid biosynthesis; L-tryptophan biosynthesis; L-tryptophan from chorismate: step 2/5. Functionally, catalyzes the transfer of the phosphoribosyl group of 5-phosphorylribose-1-pyrophosphate (PRPP) to anthranilate to yield N-(5'-phosphoribosyl)-anthranilate (PRA). This is Anthranilate phosphoribosyltransferase from Salinibacter ruber (strain DSM 13855 / M31).